We begin with the raw amino-acid sequence, 62 residues long: Large ribosomal subunit protein bL28 (62 aa).

Residues 1 to 24 (MARKCVITGRKTKAGNNRSHAMNS) are disordered. A compositionally biased stretch (polar residues) spans 14–24 (AGNNRSHAMNS).

It belongs to the bacterial ribosomal protein bL28 family.

This is Large ribosomal subunit protein bL28 from Bacillus pumilus (strain SAFR-032).